Consider the following 137-residue polypeptide: Small ribosomal subunit protein uS19 (137 aa).

This sequence belongs to the universal ribosomal protein uS19 family.

Protein S19 forms a complex with S13 that binds strongly to the 16S ribosomal RNA. The protein is Small ribosomal subunit protein uS19 of Methanospirillum hungatei JF-1 (strain ATCC 27890 / DSM 864 / NBRC 100397 / JF-1).